A 175-amino-acid polypeptide reads, in one-letter code: Ribosome maturation factor RimM (175 aa).

One can recognise a PRC barrel domain in the interval 100–173; that stretch reads EGEYYFHEII…IIIIRPMEGL (74 aa).

It belongs to the RimM family. In terms of assembly, binds ribosomal protein uS19.

The protein resides in the cytoplasm. An accessory protein needed during the final step in the assembly of 30S ribosomal subunit, possibly for assembly of the head region. Essential for efficient processing of 16S rRNA. May be needed both before and after RbfA during the maturation of 16S rRNA. It has affinity for free ribosomal 30S subunits but not for 70S ribosomes. The polypeptide is Ribosome maturation factor RimM (Geobacillus thermodenitrificans (strain NG80-2)).